The following is a 280-amino-acid chain: MSFRSSSSYSVQSKNVSGGGGFGSSYGGGSSSSFGGGYGAGFGGGYGAGFGGGASSGFSSSSSGGFGAAAASSSFSSFGGNDKQTMQNLNDRLASYLEKVRALEAANADLELKIREWYEKQKGSGIGAASKDFSKYFEIISDLRNKILFATIDNPRVVLQIDDAKLAADDFRLKFENELALRQSVEADINGLRRVLDELTLARGDLEMQIESLTEELAYLKKNHEEEMSIAKGSAAGQVTVEMDAAPGVDLNKILSDMRADYETLAEKNRRDAELWFNQK.

Residues M1–N81 form a head region. The interval D82–W117 is coil 1A. The IF rod domain maps to D82 to K280. The tract at residues Y118–I139 is linker 1. The tract at residues I140–A231 is coil 1B. Positions K232–I254 are linker 12. The segment at L255–K280 is coil 2.

The protein belongs to the intermediate filament family. As to quaternary structure, heterotetramer of two type I and two type II keratins.

The protein is Keratin, type I cytoskeletal 47 kDa (xk81b1) of Xenopus laevis (African clawed frog).